Consider the following 61-residue polypeptide: Large ribosomal subunit protein uL30 (61 aa).

This sequence belongs to the universal ribosomal protein uL30 family. Part of the 50S ribosomal subunit.

The chain is Large ribosomal subunit protein uL30 from Maricaulis maris (strain MCS10) (Caulobacter maris).